Reading from the N-terminus, the 834-residue chain is MEEKTQIKTFLGSKLPKYGTKSVRSTLQPMPNGTPVNLLGTSKNSNVKSYIKNNGSDCPSSHSFNWRKANKYQLCAQGVEEPNNTQNSHDKIIDPEKRVPTQGMFDKNGIKGGLKSVSLFTSKLAKPSTMFVSSTEELNQKSFSGPSNLGKFTKGTLLGRTSYSSINTPKSQLNGFYGNRSAGSMQRPRANSCATRSSSGESLAQSPDSSKSINCEKMVRSQSFSHSIQNSFLPPSSITRSHSFNRAVDLTKPYQNQQLSIRVPLRSSMLTRNSRQPEVLNGNEHLGYGFNRPYAAGGKKLALPNGPGVTSTLGYRMVHPSLLKSSRSPFSGTMTVDGNKNSPADTCVEEDATVLAKDRAANKDQELIENESYRTKNNQTMKHDAKMRYLSDDVDDISLSSLSSSDKNDLSEDFSDDFIDIEDSNRTRITPEEMSLKEEKHENGPPQDMFDSPKENEKAFSKTDEWIDISVSDRSECTKHTSGNNLVSPDTDYRAGSSFELSPSDSSDGTYMWDEEGLEPIGNVHPVGSYESSEMNSIDILNNLESCDLEDDDLMLDVDLPEDAPLENVECDNMNRFDRPDRNVRQPQEGFWKRPPQRWSGQEHYHLSHPDHYHHHGKSDLSRGSPYRESPLGHFESYGGMPFFQAQKMFVDVPENTVILDEMTLRHMVQDCTAVKTQLLKLKRLLHQHDGSGSLHDIQLSLPSSPEPEDGDKVYKNEDLLNEIKQLKDEIKKKDEKIQLLELQLATQHICHQKCKEEKCTYADKYTQTPWRRIPGGYSAPSFSPWQGSFQGIPRTVPPHRRQTSSTTAFQQPSQTHRSHPGKTNKATTYRGPQ.

The interval 169-212 (PKSQLNGFYGNRSAGSMQRPRANSCATRSSSGESLAQSPDSSKS) is disordered. Over residues 192–212 (SCATRSSSGESLAQSPDSSKS) the composition is skewed to polar residues. Ser223 is modified (phosphoserine). Residues 426–443 (RTRITPEEMSLKEEKHEN) are compositionally biased toward basic and acidic residues. 5 disordered regions span residues 426 to 454 (RTRI…DSPK), 477 to 509 (CTKH…SSDG), 573 to 628 (NMNR…SPYR), 695 to 714 (LHDI…GDKV), and 780 to 834 (APSF…RGPQ). At Ser452 the chain carries Phosphoserine. The span at 497 to 507 (SSFELSPSDSS) shows a compositional bias: low complexity. Basic and acidic residues-rich tracts occupy residues 573–584 (NMNRFDRPDRNV) and 601–611 (GQEHYHLSHPD). Residues 712–749 (DKVYKNEDLLNEIKQLKDEIKKKDEKIQLLELQLATQH) adopt a coiled-coil conformation. 2 stretches are compositionally biased toward polar residues: residues 781-790 (PSFSPWQGSF) and 804-816 (TSST…PSQT).

It belongs to the CCSER family.

It is found in the cytoplasm. It localises to the cytoskeleton. Microtubule-binding protein which might play a role in microtubule bundling. The sequence is that of Serine-rich coiled-coil domain-containing protein 2 (CCSER2) from Homo sapiens (Human).